We begin with the raw amino-acid sequence, 168 residues long: Transcription antitermination protein NusB (168 aa).

It belongs to the NusB family.

Its function is as follows. Involved in transcription antitermination. Required for transcription of ribosomal RNA (rRNA) genes. Binds specifically to the boxA antiterminator sequence of the ribosomal RNA (rrn) operons. The polypeptide is Transcription antitermination protein NusB (Prosthecochloris aestuarii (strain DSM 271 / SK 413)).